A 287-amino-acid chain; its full sequence is Glutamate racemase (287 aa).

Substrate is bound by residues 32-33 and 64-65; these read DS and YG. The active-site Proton donor/acceptor is Cys96. Residue 97 to 98 participates in substrate binding; it reads NT. Cys208 functions as the Proton donor/acceptor in the catalytic mechanism. 209 to 210 is a binding site for substrate; that stretch reads TH.

It belongs to the aspartate/glutamate racemases family.

It carries out the reaction L-glutamate = D-glutamate. The protein operates within cell wall biogenesis; peptidoglycan biosynthesis. Provides the (R)-glutamate required for cell wall biosynthesis. This is Glutamate racemase from Photorhabdus laumondii subsp. laumondii (strain DSM 15139 / CIP 105565 / TT01) (Photorhabdus luminescens subsp. laumondii).